Reading from the N-terminus, the 396-residue chain is Period circadian protein (396 aa).

Disordered regions lie at residues 27 to 120 (VTAP…APPV), 164 to 188 (LEYS…WEGE), 253 to 273 (GGNG…TNQY), and 333 to 362 (SPSS…TSQA). The span at 93–114 (GTSGTGNSGDGGGGGGANGTGS) shows a compositional bias: gly residues. The span at 253-262 (GGNGNVGSGN) shows a compositional bias: gly residues. The span at 333–342 (SPSSTNTNPN) shows a compositional bias: low complexity.

Forms a heterodimer with timeless (TIM); the complex then translocates into the nucleus. In terms of processing, phosphorylated with a circadian rhythmicity, probably by the double-time protein (dbt). Phosphorylation could be implicated in the stability of per monomer and in the formation of heterodimer per-tim.

It localises to the nucleus. It is found in the cytoplasm. The protein resides in the perinuclear region. In terms of biological role, essential for biological clock functions. Determines the period length of circadian and ultradian rhythms; an increase in PER dosage leads to shortened circadian rhythms and a decrease leads to lengthened circadian rhythms. Essential for the circadian rhythmicity of locomotor activity, eclosion behavior, and for the rhythmic component of the male courtship song that originates in the thoracic nervous system. The biological cycle depends on the rhythmic formation and nuclear localization of the TIM-PER complex. Light induces the degradation of TIM, which promotes elimination of PER. Nuclear activity of the heterodimer coordinatively regulates PER and TIM transcription through a negative feedback loop. Behaves as a negative element in circadian transcriptional loop. Does not appear to bind DNA, suggesting indirect transcriptional inhibition. The polypeptide is Period circadian protein (per) (Drosophila pavlovskiana (Fruit fly)).